The primary structure comprises 76 residues: Rhesus theta defensin-1/2 subunit B (76 aa).

Residues 1-22 (MRTFALLTAMLLLVALHAQAEA) form the signal peptide. The propeptide occupies 23–64 (RQARADEAAAQQQPGADDQGMAHSFTRPENAALPLSESARGL). The tract at residues 25–54 (ARADEAAAQQQPGADDQGMAHSFTRPENAA) is disordered. Residues 30–44 (AAAQQQPGADDQGMA) show a composition bias toward low complexity. Arg-65 is covalently cross-linked (Cyclopeptide (Arg-Cys) (interchain with C-73 in subunit A); in form RTD-1). Residue Arg-65 forms a Cyclopeptide (Arg-Cys) (interchain with C-73 in subunit B); in form RTD-2 linkage. Residues Cys-68 and Cys-73 are joined by a disulfide bond. A Cyclopeptide (Cys-Arg) (interchain with R-65 in subunit A); in form RTD-1 cross-link involves residue Cys-73. Cys-73 is covalently cross-linked (Cyclopeptide (Cys-Arg) (interchain with R-65 in subunit B); in form RTD-2). The propeptide occupies 74 to 76 (QLL).

It belongs to the alpha-defensin family. Theta subfamily. As to quaternary structure, RTD-1 is a cyclic heterodimer composed of subunits A and B; disulfide-linked. RTD-2 is a cyclic homodimer composed of two subunits B; disulfide-linked. Post-translationally, forms a cyclic peptide with 1 subunit B (RTD-2) or with 1 subunit A (RTD-1). An additional intersubunit disulfide bond is formed. As to expression, RTD-1 is expressed in bone marrow. Detected in promyelocytes, myelocytes and mature neutrophils and monocytes.

In terms of biological role, RTD-1 and RTD-2 have similar antimicrobial activities against the Gram-positive bacteria S.aureus 502A and L.monocytogenes, the Gram-negative bacterium S.typhimurium, and the fungi C.albicans 16820 and C.neoformans 271A. RTD-2 is 2-3-fold less active than RTD-1 against E.coli ML35. This Macaca mulatta (Rhesus macaque) protein is Rhesus theta defensin-1/2 subunit B (RTD1B).